We begin with the raw amino-acid sequence, 273 residues long: Manganese catalase (273 aa).

Position 35 (Glu35) interacts with Mn(2+). Residues Asp57 and Asp61 each coordinate Ca(2+). Mn(2+)-binding residues include Glu66, His69, Glu149, and His182. Residues Asn220, Ser222, and Gly224 each contribute to the Ca(2+) site. The interval 254–273 is disordered; it reads EKPELKPAPPCVHNTLPGRE.

This sequence belongs to the manganese catalase family. In terms of assembly, homohexamer. Requires Ca(2+) as cofactor. Mn(2+) is required as a cofactor.

It carries out the reaction 2 H2O2 = O2 + 2 H2O. Its activity is regulated as follows. Inhibited in the presence of EDTA. Resistant to inhibition by sodium azide. Functionally, catalyzes the decomposition of hydrogen peroxide into water and oxygen. No significant activity could be detected with any of the other tested substrates, including glutathione, pyrogallol, NADH, NADPH and o-dianisidine. The chain is Manganese catalase from Bacillus subtilis.